The primary structure comprises 268 residues: Virulence plasmid ParA family protein pGP5-D (268 aa).

13–20 (FKGGTGKT) is an ATP binding site.

It belongs to the ParA family.

This is Virulence plasmid ParA family protein pGP5-D from Chlamydia muridarum (strain MoPn / Nigg).